Reading from the N-terminus, the 198-residue chain is RNA-free ribonuclease P (198 aa).

It belongs to the HARP family.

The enzyme catalyses Endonucleolytic cleavage of RNA, removing 5'-extranucleotides from tRNA precursor.. In terms of biological role, RNA-free RNase P that catalyzes the removal of the 5'-leader sequence from pre-tRNA to produce the mature 5'-terminus. This chain is RNA-free ribonuclease P, found in Thermococcus kodakarensis (strain ATCC BAA-918 / JCM 12380 / KOD1) (Pyrococcus kodakaraensis (strain KOD1)).